The primary structure comprises 73 residues: Translational regulator CsrA (73 aa).

The segment at 54–73 (ENRAASDSPWSPNSLPQLPV) is disordered. The span at 61–73 (SPWSPNSLPQLPV) shows a compositional bias: polar residues.

Belongs to the CsrA/RsmA family. In terms of assembly, homodimer; the beta-strands of each monomer intercalate to form a hydrophobic core, while the alpha-helices form wings that extend away from the core.

It localises to the cytoplasm. A translational regulator that binds mRNA to regulate translation initiation and/or mRNA stability. Usually binds in the 5'-UTR at or near the Shine-Dalgarno sequence preventing ribosome-binding, thus repressing translation. Its main target seems to be the major flagellin gene, while its function is anatagonized by FliW. The protein is Translational regulator CsrA of Treponema pallidum (strain Nichols).